We begin with the raw amino-acid sequence, 50 residues long: Small ribosomal subunit protein uS14 (50 aa).

Residues cysteine 15, cysteine 18, cysteine 33, and cysteine 36 each contribute to the Zn(2+) site.

It belongs to the universal ribosomal protein uS14 family. Zinc-binding uS14 subfamily. As to quaternary structure, part of the 30S ribosomal subunit. The cofactor is Zn(2+).

Functionally, binds 16S rRNA, required for the assembly of 30S particles. This chain is Small ribosomal subunit protein uS14, found in Methanococcoides burtonii (strain DSM 6242 / NBRC 107633 / OCM 468 / ACE-M).